A 733-amino-acid chain; its full sequence is Forkhead box protein K1 (733 aa).

Ala2 carries the post-translational modification N-acetylalanine. Residues 2 to 40 are interaction with SIN3A and SIN3B; that stretch reads AEVGEDSGARALLALRSAPCSPVLCAAAAAAAFPAAAPP. The interval 36–79 is disordered; the sequence is AAAPPPAPAQPQPPPGPPPPPPPPLPPGAIAGAGSSGGSSGVSG. Pro residues predominate over residues 37-62; sequence AAPPPAPAQPQPPPGPPPPPPPPLPP. Positions 95-420 are required for interaction with FOXO4 and MEF2C; sequence AASVRQSPGP…PLSSRSAPAS (326 aa). Phosphoserine is present on Ser101. Residues 123-175 form the FHA domain; the sequence is VTIGRNSSQGSVDLSMGLSSFISRRHLQLSFQEPHFYLRCLGKNGVFVDGAFQ. Residues Arg161 and Arg191 each carry the omega-N-methylarginine modification. 4 positions are modified to phosphoserine: Ser213, Ser223, Ser239, and Ser243. Residues Thr245 and Thr247 each carry the phosphothreonine modification. Phosphoserine is present on residues Ser253, Ser257, Ser295, and Ser299. Disordered stretches follow at residues 287–306 and 413–436; these read ASEQ…ESKP and SSRS…GLQT. The fork-head DNA-binding region spans 305–400; it reads KPPFSYAQLI…EQAFRKRRQR (96 aa). 2 positions are modified to phosphoserine: Ser416 and Ser420. At Thr422 the chain carries Phosphothreonine. Ser428 carries the phosphoserine modification. Thr436 is modified (phosphothreonine). 3 positions are modified to phosphoserine: Ser441, Ser445, and Ser459. Residues 676–697 are compositionally biased toward low complexity; that stretch reads VAATATTTPATATTASASASST. A disordered region spans residues 676-733; it reads VAATATTTPATATTASASASSTGEPEVKRSRVEEPSGAVTTPAGVIAAAGPQGPGTGE. The span at 700-709 shows a compositional bias: basic and acidic residues; it reads PEVKRSRVEE.

In terms of assembly, interacts with SIN3A and SIN3B (via PAH2) to form a complex which represses transcription. Component of SIN3A-, but not SIN3B-, containing multiprotein complexes. Interacts with FOXO4 and MEF2C; both interactions inhibit FOXO4 and MEF2C transactivation activity. Interacts (when phosphorylated) with YWHAE/14-3-3-epsilon; promotes sequestration in the cytoplasm and leads to impaired ability to bind DNA. Interacts with FHL2. Interacts with SRF. Interacts with DVL2 and DVL3; the interaction induces DVL2 nuclear translocation. Interacts with BAP1 (when phosphorylated). Accessory component of the polycomb repressive deubiquitinase (PR-DUB) complex, at least composed of BAP1, one of ASXL1, ASXL2 or (probably) ASXL3 and one of MBD5 or MBD6. The PR-DUB core associates with a number of accessory proteins, including FOXK1, FOXK2, KDM1B, HCFC1 and OGT. Post-translationally, phosphorylation by GSK3 (GSK3A or GSK3B) promotes interaction with YWHAE/14-3-3-epsilon and retention in the cytoplasm. In response to mTORC1 signaling, phosphorylation by GSK3 is prevented, leading to translocation to the nucleus. In terms of tissue distribution, expressed both developing and adult tissues. In adults, significant expression is seen in tumors of the brain, colon and lymph node.

It localises to the nucleus. The protein resides in the cytoplasm. In terms of biological role, transcriptional regulator involved in different processes such as glucose metabolism, aerobic glycolysis, muscle cell differentiation and autophagy. Recognizes and binds the forkhead DNA sequence motif (5'-GTAAACA-3') and can both act as a transcription activator or repressor, depending on the context. Together with FOXK2, acts as a key regulator of metabolic reprogramming towards aerobic glycolysis, a process in which glucose is converted to lactate in the presence of oxygen. Acts by promoting expression of enzymes for glycolysis (such as hexokinase-2 (HK2), phosphofructokinase, pyruvate kinase (PKLR) and lactate dehydrogenase), while suppressing further oxidation of pyruvate in the mitochondria by up-regulating pyruvate dehydrogenase kinases PDK1 and PDK4. Probably plays a role in gluconeogenesis during overnight fasting, when lactate from white adipose tissue and muscle is the main substrate. Involved in mTORC1-mediated metabolic reprogramming: in response to mTORC1 signaling, translocates into the nucleus and regulates the expression of genes associated with glycolysis and downstream anabolic pathways, such as HIF1A, thereby regulating glucose metabolism. Together with FOXK2, acts as a negative regulator of autophagy in skeletal muscle: in response to starvation, enters the nucleus, binds the promoters of autophagy genes and represses their expression, preventing proteolysis of skeletal muscle proteins. Acts as a transcriptional regulator of the myogenic progenitor cell population in skeletal muscle. Binds to the upstream enhancer region (CCAC box) of myoglobin (MB) gene, regulating the myogenic progenitor cell population. Promotes muscle progenitor cell proliferation by repressing the transcriptional activity of FOXO4, thereby inhibiting myogenic differentiation. Involved in remodeling processes of adult muscles that occur in response to physiological stimuli. Required to correct temporal orchestration of molecular and cellular events necessary for muscle repair. Represses myogenic differentiation by inhibiting MEFC activity. Positively regulates Wnt/beta-catenin signaling by translocating DVL into the nucleus. Reduces virus replication, probably by binding the interferon stimulated response element (ISRE) to promote antiviral gene expression. Accessory component of the polycomb repressive deubiquitinase (PR-DUB) complex; recruits the PR-DUB complex to specific FOXK1-bound genes. The sequence is that of Forkhead box protein K1 from Homo sapiens (Human).